The primary structure comprises 84 residues: Small ribosomal subunit protein bS16 (84 aa).

This sequence belongs to the bacterial ribosomal protein bS16 family.

In Deinococcus radiodurans (strain ATCC 13939 / DSM 20539 / JCM 16871 / CCUG 27074 / LMG 4051 / NBRC 15346 / NCIMB 9279 / VKM B-1422 / R1), this protein is Small ribosomal subunit protein bS16.